The following is a 205-amino-acid chain: uncharacterized protein (205 aa).

The protein belongs to the peptidase C56 family.

This is an uncharacterized protein from Methanocaldococcus jannaschii (strain ATCC 43067 / DSM 2661 / JAL-1 / JCM 10045 / NBRC 100440) (Methanococcus jannaschii).